Here is a 142-residue protein sequence, read N- to C-terminus: Universal stress protein G (142 aa).

This sequence belongs to the universal stress protein A family.

The polypeptide is Universal stress protein G (uspG) (Salmonella typhi).